The chain runs to 296 residues: Lipoyl synthase (296 aa).

[4Fe-4S] cluster is bound by residues Cys-37, Cys-42, Cys-48, Cys-63, Cys-67, Cys-70, and Ser-276. Positions Trp-49 to Leu-265 constitute a Radical SAM core domain.

This sequence belongs to the radical SAM superfamily. Lipoyl synthase family. The cofactor is [4Fe-4S] cluster.

The protein localises to the cytoplasm. The enzyme catalyses [[Fe-S] cluster scaffold protein carrying a second [4Fe-4S](2+) cluster] + N(6)-octanoyl-L-lysyl-[protein] + 2 oxidized [2Fe-2S]-[ferredoxin] + 2 S-adenosyl-L-methionine + 4 H(+) = [[Fe-S] cluster scaffold protein] + N(6)-[(R)-dihydrolipoyl]-L-lysyl-[protein] + 4 Fe(3+) + 2 hydrogen sulfide + 2 5'-deoxyadenosine + 2 L-methionine + 2 reduced [2Fe-2S]-[ferredoxin]. The protein operates within protein modification; protein lipoylation via endogenous pathway; protein N(6)-(lipoyl)lysine from octanoyl-[acyl-carrier-protein]: step 2/2. Functionally, catalyzes the radical-mediated insertion of two sulfur atoms into the C-6 and C-8 positions of the octanoyl moiety bound to the lipoyl domains of lipoate-dependent enzymes, thereby converting the octanoylated domains into lipoylated derivatives. The sequence is that of Lipoyl synthase from Rickettsia rickettsii (strain Iowa).